The primary structure comprises 282 residues: Protoheme IX farnesyltransferase (282 aa).

A run of 9 helical transmembrane segments spans residues 9–29 (LAKPGIIFGNLITLTGGFLLA), 39–59 (LPLFVYVMIGVALMIAAGCVF), 79–99 (LVTGDISVIQATIYGTILLIL), 102–122 (LVLYYLVNLLTLWIIIIGFIV), 139–159 (VLGGISGAIPPVAGYTAVVNI), 165–185 (LALFLILFFWQIPHSYAIAML), 210–230 (IMLFYLALFVVSCALPAVLGS), 231–251 (ADLFSFIVCMLVALFWMYKSI), and 261–281 (VFAKTVFKFSIIVITAICLTM).

The protein belongs to the UbiA prenyltransferase family. Protoheme IX farnesyltransferase subfamily.

Its subcellular location is the cell inner membrane. The enzyme catalyses heme b + (2E,6E)-farnesyl diphosphate + H2O = Fe(II)-heme o + diphosphate. It functions in the pathway porphyrin-containing compound metabolism; heme O biosynthesis; heme O from protoheme: step 1/1. Functionally, converts heme B (protoheme IX) to heme O by substitution of the vinyl group on carbon 2 of heme B porphyrin ring with a hydroxyethyl farnesyl side group. The sequence is that of Protoheme IX farnesyltransferase from Francisella tularensis subsp. holarctica (strain FTNF002-00 / FTA).